Consider the following 433-residue polypeptide: Serine hydroxymethyltransferase (433 aa).

(6S)-5,6,7,8-tetrahydrofolate-binding positions include L132 and 136 to 138; that span reads GHL. An N6-(pyridoxal phosphate)lysine modification is found at K241.

Belongs to the SHMT family. Homodimer. Pyridoxal 5'-phosphate serves as cofactor.

Its subcellular location is the cytoplasm. It carries out the reaction (6R)-5,10-methylene-5,6,7,8-tetrahydrofolate + glycine + H2O = (6S)-5,6,7,8-tetrahydrofolate + L-serine. It participates in one-carbon metabolism; tetrahydrofolate interconversion. Its pathway is amino-acid biosynthesis; glycine biosynthesis; glycine from L-serine: step 1/1. In terms of biological role, catalyzes the reversible interconversion of serine and glycine with tetrahydrofolate (THF) serving as the one-carbon carrier. This reaction serves as the major source of one-carbon groups required for the biosynthesis of purines, thymidylate, methionine, and other important biomolecules. Also exhibits THF-independent aldolase activity toward beta-hydroxyamino acids, producing glycine and aldehydes, via a retro-aldol mechanism. The polypeptide is Serine hydroxymethyltransferase (Nitrobacter winogradskyi (strain ATCC 25391 / DSM 10237 / CIP 104748 / NCIMB 11846 / Nb-255)).